A 526-amino-acid polypeptide reads, in one-letter code: Cytochrome P450 monooxygenase 58 (526 aa).

Transmembrane regions (helical) follow at residues 13 to 33, 115 to 135, and 306 to 326; these read IASS…LLLI, FIMA…GYGK, and IGAG…AMTL. Cysteine 451 provides a ligand contact to heme.

It belongs to the cytochrome P450 family. It depends on heme as a cofactor.

The protein localises to the membrane. It participates in secondary metabolite biosynthesis. Cytochrome P450 monooxygenase that is able to use delta(6)-protoilludene as a substrate to produce delta(6)-protoilludene-8-ol. The polypeptide is Cytochrome P450 monooxygenase 58 (Postia placenta (strain ATCC 44394 / Madison 698-R) (Brown rot fungus)).